A 333-amino-acid polypeptide reads, in one-letter code: 4-hydroxy-3-methylbut-2-enyl diphosphate reductase (333 aa).

Cys20 contacts [4Fe-4S] cluster. Residues His49 and His85 each coordinate (2E)-4-hydroxy-3-methylbut-2-enyl diphosphate. Dimethylallyl diphosphate-binding residues include His49 and His85. Isopentenyl diphosphate is bound by residues His49 and His85. Cys107 contributes to the [4Fe-4S] cluster binding site. Position 135 (His135) interacts with (2E)-4-hydroxy-3-methylbut-2-enyl diphosphate. His135 contributes to the dimethylallyl diphosphate binding site. His135 lines the isopentenyl diphosphate pocket. Catalysis depends on Glu137, which acts as the Proton donor. Residue Thr176 participates in (2E)-4-hydroxy-3-methylbut-2-enyl diphosphate binding. Cys206 contributes to the [4Fe-4S] cluster binding site. (2E)-4-hydroxy-3-methylbut-2-enyl diphosphate is bound by residues Ser234, Ser235, Asn236, and Ser279. 4 residues coordinate dimethylallyl diphosphate: Ser234, Ser235, Asn236, and Ser279. Isopentenyl diphosphate contacts are provided by Ser234, Ser235, Asn236, and Ser279.

This sequence belongs to the IspH family. It depends on [4Fe-4S] cluster as a cofactor.

It catalyses the reaction isopentenyl diphosphate + 2 oxidized [2Fe-2S]-[ferredoxin] + H2O = (2E)-4-hydroxy-3-methylbut-2-enyl diphosphate + 2 reduced [2Fe-2S]-[ferredoxin] + 2 H(+). The catalysed reaction is dimethylallyl diphosphate + 2 oxidized [2Fe-2S]-[ferredoxin] + H2O = (2E)-4-hydroxy-3-methylbut-2-enyl diphosphate + 2 reduced [2Fe-2S]-[ferredoxin] + 2 H(+). It participates in isoprenoid biosynthesis; dimethylallyl diphosphate biosynthesis; dimethylallyl diphosphate from (2E)-4-hydroxy-3-methylbutenyl diphosphate: step 1/1. It functions in the pathway isoprenoid biosynthesis; isopentenyl diphosphate biosynthesis via DXP pathway; isopentenyl diphosphate from 1-deoxy-D-xylulose 5-phosphate: step 6/6. In terms of biological role, catalyzes the conversion of 1-hydroxy-2-methyl-2-(E)-butenyl 4-diphosphate (HMBPP) into a mixture of isopentenyl diphosphate (IPP) and dimethylallyl diphosphate (DMAPP). Acts in the terminal step of the DOXP/MEP pathway for isoprenoid precursor biosynthesis. The chain is 4-hydroxy-3-methylbut-2-enyl diphosphate reductase from Rhizobium etli (strain CIAT 652).